We begin with the raw amino-acid sequence, 1063 residues long: E3 ubiquitin-protein ligase PDZRN3 (1063 aa).

The RING-type; degenerate zinc-finger motif lies at 18 to 56 (CALCHKVLEDPLTTPCGHVFCAGCVLPWVVQEGSCPARC). The TRAF-type zinc-finger motif lies at 100 to 158 (EHLERCDFAPARCRHAGCGQLLLRRDVEAHMRDACDARPVGRCQEGCGLPLTHGEQRAG). PDZ domains are found at residues 249-339 (TLVL…LRRT) and 419-503 (EVGL…IARP). The residue at position 427 (serine 427) is a Phosphoserine. Residues 545–602 (QKKHEEDGGTTDTATILSNQHEKDSGVGRTDESTRNDESSEQENNGEDATASANPLAG) are disordered. The span at 554–563 (TTDTATILSN) shows a compositional bias: polar residues. The span at 564-582 (QHEKDSGVGRTDESTRNDE) shows a compositional bias: basic and acidic residues. A coiled-coil region spans residues 680-705 (ESVDKELELLNEELRSIELECLSIVR). The span at 746–755 (ELPEKSDKDS) shows a compositional bias: basic and acidic residues. Disordered stretches follow at residues 746–798 (ELPE…IEAY) and 834–853 (IKERRGSDGSRSPTASPKLG). The span at 756–770 (SSAYNTGESCRSTPL) shows a compositional bias: polar residues.

In terms of assembly, interacts with NLGN1 and EFNB2. Interacts with UBE2D2 and with MUSK via the first PDZ domain. In myotubes, the interaction between PDZRN3 and MUSK is enhanced upon agrin stimulation. Post-translationally, auto-ubiquitinated. In terms of tissue distribution, highly expressed in skeletal and cardiac muscle and at lower levels in spinal cord and brain (at protein level). Also expressed in kidney and lung. In muscles, concentrated at the neuromuscular junction (NMJ).

Its subcellular location is the synapse. The protein localises to the cytoplasm. The enzyme catalyses S-ubiquitinyl-[E2 ubiquitin-conjugating enzyme]-L-cysteine + [acceptor protein]-L-lysine = [E2 ubiquitin-conjugating enzyme]-L-cysteine + N(6)-ubiquitinyl-[acceptor protein]-L-lysine.. Its pathway is protein modification; protein ubiquitination. Functionally, E3 ubiquitin-protein ligase. Plays an important role in regulating the surface level of MUSK on myotubes. Mediates the ubiquitination of MUSK, promoting its endocytosis and lysosomal degradation. Might contribute to terminal myogenic differentiation. This Mus musculus (Mouse) protein is E3 ubiquitin-protein ligase PDZRN3 (Pdzrn3).